The sequence spans 478 residues: ATP synthase subunit beta (478 aa).

164–171 (GGAGVGKT) provides a ligand contact to ATP.

This sequence belongs to the ATPase alpha/beta chains family. F-type ATPases have 2 components, CF(1) - the catalytic core - and CF(0) - the membrane proton channel. CF(1) has five subunits: alpha(3), beta(3), gamma(1), delta(1), epsilon(1). CF(0) has three main subunits: a(1), b(2) and c(9-12). The alpha and beta chains form an alternating ring which encloses part of the gamma chain. CF(1) is attached to CF(0) by a central stalk formed by the gamma and epsilon chains, while a peripheral stalk is formed by the delta and b chains.

It is found in the cell membrane. It catalyses the reaction ATP + H2O + 4 H(+)(in) = ADP + phosphate + 5 H(+)(out). Its function is as follows. Produces ATP from ADP in the presence of a proton gradient across the membrane. The catalytic sites are hosted primarily by the beta subunits. The chain is ATP synthase subunit beta from Streptomyces avermitilis (strain ATCC 31267 / DSM 46492 / JCM 5070 / NBRC 14893 / NCIMB 12804 / NRRL 8165 / MA-4680).